Reading from the N-terminus, the 659-residue chain is uncharacterized protein (659 aa).

The signal sequence occupies residues 1-25 (MVKRRLSAFGNAFLIYFIIFRLCCC). Residues 26-556 (SPQTSHWCKY…LYQESSFQKR (531 aa)) lie on the Lumenal side of the membrane. N-linked (GlcNAc...) asparagine glycosylation is found at Asn94, Asn111, Asn128, and Asn142. Residues 173 to 335 (AATIDSNIDE…SLLRVYGKTM (163 aa)) form the SUN domain. N-linked (GlcNAc...) asparagine glycans are attached at residues Asn393 and Asn415. The interval 417 to 445 (TGKSESYPATSTRSFNDISPSSSSSYSTA) is disordered. The span at 423 to 434 (YPATSTRSFNDI) shows a compositional bias: polar residues. N-linked (GlcNAc...) asparagine glycans are attached at residues Asn495 and Asn504. A helical transmembrane segment spans residues 557 to 574 (LLMLQLTVLIVLTVYMAV). The Cytoplasmic portion of the chain corresponds to 575–659 (SRLPENLPTT…IIHSRSHSVC (85 aa)). Disordered regions lie at residues 580-603 (NLPT…SRDE) and 632-659 (KRDP…HSVC). Residues 581-592 (LPTTRSSSNNPI) are compositionally biased toward polar residues. Positions 641 to 651 (SIHEREQDKII) are enriched in basic and acidic residues.

Belongs to the SLP1 family. As to quaternary structure, interacts with EMP65.

The protein localises to the endoplasmic reticulum membrane. Functionally, may be involved in membrane protein folding. This is an uncharacterized protein from Schizosaccharomyces pombe (strain 972 / ATCC 24843) (Fission yeast).